We begin with the raw amino-acid sequence, 100 residues long: Urease subunit gamma (100 aa).

The protein belongs to the urease gamma subunit family. Heterotrimer of UreA (gamma), UreB (beta) and UreC (alpha) subunits. Three heterotrimers associate to form the active enzyme.

The protein localises to the cytoplasm. It carries out the reaction urea + 2 H2O + H(+) = hydrogencarbonate + 2 NH4(+). It participates in nitrogen metabolism; urea degradation; CO(2) and NH(3) from urea (urease route): step 1/1. The sequence is that of Urease subunit gamma from Haemophilus influenzae (strain PittGG).